The chain runs to 167 residues: Cofilin-2 (167 aa).

The ADF-H domain maps to 4-153 (GVTVNDEVIK…KDRCTLADKL (150 aa)). A Nuclear localization signal motif is present at residues 30 to 34 (KKRKK).

It belongs to the actin-binding proteins ADF family.

Its subcellular location is the nucleus matrix. The protein resides in the cytoplasm. It is found in the cytoskeleton. In terms of biological role, controls reversibly actin polymerization and depolymerization in a pH-sensitive manner. It has the ability to bind G- and F-actin in a 1:1 ratio of cofilin to actin. It is the major component of intranuclear and cytoplasmic actin rods. This is Cofilin-2 (cfl2) from Xenopus tropicalis (Western clawed frog).